The following is an 86-amino-acid chain: Large ribosomal subunit protein eL20 (86 aa).

The protein belongs to the eukaryotic ribosomal protein eL20 family. In terms of assembly, part of the 50S ribosomal subunit. Binds 23S rRNA.

This chain is Large ribosomal subunit protein eL20, found in Sulfolobus acidocaldarius (strain ATCC 33909 / DSM 639 / JCM 8929 / NBRC 15157 / NCIMB 11770).